A 315-amino-acid polypeptide reads, in one-letter code: Calcium homeostasis modulator protein 6 (315 aa).

At 1–21 (MEKFRAVLDLHVKHHSALGYG) the chain is on the cytoplasmic side. The helical transmembrane segment at 22–37 (LVTLLTAGGERIFSAV) threads the bilayer. At 38–46 (AFQCPCSAA) the chain is on the extracellular side. 3 cysteine pairs are disulfide-bonded: cysteine 41/cysteine 126, cysteine 43/cysteine 155, and cysteine 139/cysteine 146. Residues 47–68 (WNLPYGLVFLLVPALALFLLGY) traverse the membrane as a helical segment. The Cytoplasmic portion of the chain corresponds to 69-102 (VLSARTWRLLTGCCSSARASCGSALRGSLVCTQI). Residues 103 to 127 (SAAAALAPLTWVAVALLGGAFYECA) traverse the membrane as a helical segment. At 128 to 169 (ATGSAAFAQRLCLGRNRSCAAELPLVPCNQAKASDVQDLLKD) the chain is on the extracellular side. A helical membrane pass occupies residues 170–192 (LKAQSQVLGWILIAVVIIILLIF). Residues 193–315 (TSVTRCLSPV…SSGINSTPEL (123 aa)) lie on the Cytoplasmic side of the membrane.

It belongs to the CALHM family. In terms of assembly, oligomerizes to form decameric and undecameric channels. Post-translationally, N-glycosylated. In terms of tissue distribution, placenta.

It is found in the cell membrane. The catalysed reaction is ATP(in) = ATP(out). Pore-forming subunit of an ATP-permeable channel. In response to pathogen-derived and proinflammatory stimuli, relocates from intracellular compartments to NK-dendritic cell and NK-macrophage immune synapses where it mediates ATP efflux and NK cell activation involved in antimicrobial and antitumor responses. May assemble to form gap junction channel-like structures with gating and ion conductance likely regulated by membrane lipids and voltage rather than by extracellular calcium levels. The chain is Calcium homeostasis modulator protein 6 from Homo sapiens (Human).